The primary structure comprises 470 residues: Phosphoribosylamine--glycine ligase (470 aa).

Residues 115–354 (KDFLKRIGVP…MAEISMAVVE (240 aa)) form the ATP-grasp domain. Residue 142–203 (REKFNNGIVV…EERLRGIEVA (62 aa)) participates in ATP binding. Glutamate 324 and asparagine 326 together coordinate Mg(2+).

The protein belongs to the GARS family. Mg(2+) serves as cofactor. The cofactor is Mn(2+).

The enzyme catalyses 5-phospho-beta-D-ribosylamine + glycine + ATP = N(1)-(5-phospho-beta-D-ribosyl)glycinamide + ADP + phosphate + H(+). It participates in purine metabolism; IMP biosynthesis via de novo pathway; N(1)-(5-phospho-D-ribosyl)glycinamide from 5-phospho-alpha-D-ribose 1-diphosphate: step 2/2. This Archaeoglobus fulgidus (strain ATCC 49558 / DSM 4304 / JCM 9628 / NBRC 100126 / VC-16) protein is Phosphoribosylamine--glycine ligase (purD).